A 474-amino-acid chain; its full sequence is DNA-binding protein (474 aa).

Residues 1 to 34 form a disordered region; sequence MAGRQREHPTVTPYLQETSPERPPPLPPKKKLRK. Tyrosine 142 is modified (phosphotyrosine; by host). Positions 231 and 233 each coordinate Zn(2+). Positions 244–278 are flexible loop; the sequence is VEVDVGSENGQRALKEQPSKTKVVQNRWGRSVVQI. Zn(2+) contacts are provided by cysteine 286, cysteine 302, cysteine 343, cysteine 345, cysteine 397, and cysteine 413. The interval 460–474 is C-terminal arm, DBP binding; the sequence is VALPTGHGDAEVEPF.

This sequence belongs to the adenoviridae E2A DNA-binding protein family. As to quaternary structure, homomultimerizes on viral ssDNA bound to pTP. Forms a initiation complex with viral polymerase, pTP and hosts NFIA and POU2F1/OCT1. Interacts with host SRCAP.

The protein localises to the host nucleus. Plays a role in the elongation phase of viral strand displacement replication by unwinding the template in an ATP-independent fashion, employing its capacity to form multimers. Also enhances the rate of initiation. Released from template upon second strand synthesis. Assembles in complex with viral pTP, viral pol, host NFIA and host POU2F1/OCT1 on viral origin of replication. Covers the whole ssDNA genome during synthesis. The complementary strand synthesis induces its relese from DNA template. May inhibit cellular transcription mediated by the interaction between host SRCAP and CBP. The polypeptide is DNA-binding protein (Homo sapiens (Human)).